Consider the following 642-residue polypeptide: Frizzled and smoothened-like protein B (642 aa).

Positions 1-26 (MFNKNNNNNKIIIILKLFLIILIVNN) are cleaved as a signal peptide. Residues 27 to 264 (NNNIKTFGLN…KWHQMYNMSK (238 aa)) lie on the Extracellular side of the membrane. The 151-residue stretch at 47–197 (DPTATCSNYI…GFFPVPCSDP (151 aa)) folds into the FZ domain. Disulfide bonds link cysteine 52-cysteine 123, cysteine 65-cysteine 116, and cysteine 143-cysteine 194. Asparagine 80, asparagine 153, asparagine 162, asparagine 177, asparagine 203, asparagine 222, and asparagine 261 each carry an N-linked (GlcNAc...) asparagine glycan. A helical membrane pass occupies residues 265-285 (ILSTISFVCSIYNVLTFGILN). The Cytoplasmic portion of the chain corresponds to 286-294 (HRRSKYNYC). The chain crosses the membrane as a helical span at residues 295–315 (ITFFSASVIIITMMDIVTYGI). Residues 316–344 (GYEKLLCPEPGRFAVQSDVSCGATGALFH) are Extracellular-facing. A helical membrane pass occupies residues 345 to 365 (IGITNGVFWWTTMSICLFAVV). The Cytoplasmic portion of the chain corresponds to 366–375 (KRIKLFDFRY). Residues 376–398 (FIIFNTTASLISVIIPLAGNAFM) form a helical membrane-spanning segment. Topologically, residues 399 to 416 (AGTGSLACWIRKTWYVNS) are extracellular. Residues 417 to 437 (VFWIPCGIALTIGSVCIILVI) form a helical membrane-spanning segment. Topologically, residues 438–460 (YEIYKITKNVSTKDNRMILLQIK) are cytoplasmic. A helical transmembrane segment spans residues 461-481 (PFLCVTLVGGSFYYLFIFNFD). The N-linked (GlcNAc...) asparagine glycan is linked to asparagine 482. Over 482–514 (NESHSKEYKEKVVDYVMCLLSDTGKECLMAGPN) the chain is Extracellular. A helical transmembrane segment spans residues 515-535 (YVAYFVFYFFIRLFGITFFCI). The Cytoplasmic portion of the chain corresponds to 536–642 (YGTSQNARDI…INSASNTSSD (107 aa)). A disordered region spans residues 578–642 (GTNPTSNSKN…INSASNTSSD (65 aa)). Residues 583-598 (SNSKNSKNNQNNQNNN) are compositionally biased toward low complexity. Residues 584–611 (NSKNSKNNQNNQNNNSRKEFESKNIELE) adopt a coiled-coil conformation. A compositionally biased stretch (basic and acidic residues) spans 599-609 (SRKEFESKNIE). 2 stretches are compositionally biased toward polar residues: residues 614 to 623 (ESISKGQTTR) and 632 to 642 (NINSASNTSSD).

It belongs to the G-protein coupled receptor Fz/Smo family.

The protein localises to the membrane. In Dictyostelium discoideum (Social amoeba), this protein is Frizzled and smoothened-like protein B (fslB).